Reading from the N-terminus, the 304-residue chain is Carbonic anhydrase 5A, mitochondrial (304 aa).

The transit peptide at 1–34 (MLRAKMLGRGPYKPLAILRHMGPLCATRPQHWRF) directs the protein to the mitochondrion. Residues 35–295 (QHSYAEKHSN…LRGRNVRSSF (261 aa)) form the Alpha-carbonic anhydrase domain. Residues His-129, His-131, and His-154 each contribute to the Zn(2+) site.

The protein belongs to the alpha-carbonic anhydrase family. The cofactor is Zn(2+). In terms of tissue distribution, high in liver, also detected in heart, lung, kidney, spleen and intestine.

It localises to the mitochondrion. It catalyses the reaction hydrogencarbonate + H(+) = CO2 + H2O. Its function is as follows. Mitochondrial carbonic anhydrase that catalyzes the reversible conversion of carbon dioxide to bicarbonate/HCO3. Mitochondria are impermeable to HCO3, and thus this intramitochondrial carbonic anhydrase is pivotal in providing HCO3 for multiple mitochondrial enzymes that catalyze the formation of essential metabolites of intermediary metabolism in the urea and Krebs cycles. This Rattus norvegicus (Rat) protein is Carbonic anhydrase 5A, mitochondrial.